A 596-amino-acid polypeptide reads, in one-letter code: Ferredoxin--nitrite reductase, chloroplastic (596 aa).

The N-terminal 28 residues, 1-28, are a transit peptide targeting the chloroplast; it reads MASSASLQRFLPPYPHAAASRCRPPGVR. The interval 1-56 is disordered; it reads MASSASLQRFLPPYPHAAASRCRPPGVRARPVQSSTVSAPSSSTPAADEAVSAERL. Residues 31–47 are compositionally biased toward low complexity; it reads PVQSSTVSAPSSSTPAA. Residues C474, C480, C515, and C519 each contribute to the [4Fe-4S] cluster site. C519 is a siroheme binding site.

Belongs to the nitrite and sulfite reductase 4Fe-4S domain family. Monomer. Siroheme serves as cofactor. The cofactor is [4Fe-4S] cluster.

Its subcellular location is the plastid. The protein resides in the chloroplast. The catalysed reaction is 6 oxidized [2Fe-2S]-[ferredoxin] + NH4(+) + 2 H2O = nitrite + 6 reduced [2Fe-2S]-[ferredoxin] + 8 H(+). Its pathway is nitrogen metabolism; nitrate reduction (assimilation). Functionally, catalyzes the six-electron reduction of nitrite to ammonium. The chain is Ferredoxin--nitrite reductase, chloroplastic from Oryza sativa subsp. japonica (Rice).